Consider the following 104-residue polypeptide: L-rhamnose mutarotase (104 aa).

Tyr-18 lines the substrate pocket. The active-site Proton donor is His-22. Substrate is bound by residues Tyr-41 and 76-77; that span reads WW.

The protein belongs to the rhamnose mutarotase family. In terms of assembly, homodimer.

Its subcellular location is the cytoplasm. It catalyses the reaction alpha-L-rhamnose = beta-L-rhamnose. The protein operates within carbohydrate metabolism; L-rhamnose metabolism. In terms of biological role, involved in the anomeric conversion of L-rhamnose. This Bacillus subtilis (strain 168) protein is L-rhamnose mutarotase.